The following is a 301-amino-acid chain: Oxygen-dependent coproporphyrinogen-III oxidase (301 aa).

Position 92 (serine 92) interacts with substrate. The a divalent metal cation site is built by histidine 96 and histidine 106. The Proton donor role is filled by histidine 106. 108-110 (NVR) is a binding site for substrate. Histidine 145 and histidine 175 together coordinate a divalent metal cation. Residues 240–275 (YVEFNLVWDRGTLFGLQTGGRTESILMSMPPLVRWE) form an important for dimerization region. 258–260 (GGR) contacts substrate.

This sequence belongs to the aerobic coproporphyrinogen-III oxidase family. Homodimer. It depends on a divalent metal cation as a cofactor.

The protein resides in the cytoplasm. It catalyses the reaction coproporphyrinogen III + O2 + 2 H(+) = protoporphyrinogen IX + 2 CO2 + 2 H2O. The protein operates within porphyrin-containing compound metabolism; protoporphyrin-IX biosynthesis; protoporphyrinogen-IX from coproporphyrinogen-III (O2 route): step 1/1. Its function is as follows. Involved in the heme biosynthesis. Catalyzes the aerobic oxidative decarboxylation of propionate groups of rings A and B of coproporphyrinogen-III to yield the vinyl groups in protoporphyrinogen-IX. In Cronobacter sakazakii (strain ATCC BAA-894) (Enterobacter sakazakii), this protein is Oxygen-dependent coproporphyrinogen-III oxidase.